A 1320-amino-acid chain; its full sequence is Phosphoribosylformylglycinamidine synthase (1320 aa).

Residues 310–321 and alanine 686 contribute to the ATP site; that span reads GAATGSGGEIRD. 4 residues coordinate Mg(2+): aspartate 687, glutamate 726, asparagine 730, and aspartate 894. Serine 896 contributes to the ATP binding site. In terms of domain architecture, Glutamine amidotransferase type-1 spans 1067–1320; that stretch reads VAILREQGVN…MFRNARAFIG (254 aa). Residue cysteine 1160 is the Nucleophile of the active site. Residues histidine 1285 and glutamate 1287 contribute to the active site.

In the N-terminal section; belongs to the FGAMS family. As to quaternary structure, monomer.

It localises to the cytoplasm. The catalysed reaction is N(2)-formyl-N(1)-(5-phospho-beta-D-ribosyl)glycinamide + L-glutamine + ATP + H2O = 2-formamido-N(1)-(5-O-phospho-beta-D-ribosyl)acetamidine + L-glutamate + ADP + phosphate + H(+). It functions in the pathway purine metabolism; IMP biosynthesis via de novo pathway; 5-amino-1-(5-phospho-D-ribosyl)imidazole from N(2)-formyl-N(1)-(5-phospho-D-ribosyl)glycinamide: step 1/2. Functionally, phosphoribosylformylglycinamidine synthase involved in the purines biosynthetic pathway. Catalyzes the ATP-dependent conversion of formylglycinamide ribonucleotide (FGAR) and glutamine to yield formylglycinamidine ribonucleotide (FGAM) and glutamate. In Colwellia psychrerythraea (strain 34H / ATCC BAA-681) (Vibrio psychroerythus), this protein is Phosphoribosylformylglycinamidine synthase.